Reading from the N-terminus, the 320-residue chain is Lipoyl synthase (320 aa).

The segment at 1–27 (MRVEIDHRNSGGGKLRHPEKQHRPDNP) is disordered. The span at 16-25 (RHPEKQHRPD) shows a compositional bias: basic and acidic residues. [4Fe-4S] cluster is bound by residues cysteine 61, cysteine 66, cysteine 72, cysteine 87, cysteine 91, cysteine 94, and serine 300. The Radical SAM core domain occupies 73–289 (WSQRHATMMI…AAMARAKGFL (217 aa)).

Belongs to the radical SAM superfamily. Lipoyl synthase family. [4Fe-4S] cluster is required as a cofactor.

Its subcellular location is the cytoplasm. The enzyme catalyses [[Fe-S] cluster scaffold protein carrying a second [4Fe-4S](2+) cluster] + N(6)-octanoyl-L-lysyl-[protein] + 2 oxidized [2Fe-2S]-[ferredoxin] + 2 S-adenosyl-L-methionine + 4 H(+) = [[Fe-S] cluster scaffold protein] + N(6)-[(R)-dihydrolipoyl]-L-lysyl-[protein] + 4 Fe(3+) + 2 hydrogen sulfide + 2 5'-deoxyadenosine + 2 L-methionine + 2 reduced [2Fe-2S]-[ferredoxin]. Its pathway is protein modification; protein lipoylation via endogenous pathway; protein N(6)-(lipoyl)lysine from octanoyl-[acyl-carrier-protein]: step 2/2. Its function is as follows. Catalyzes the radical-mediated insertion of two sulfur atoms into the C-6 and C-8 positions of the octanoyl moiety bound to the lipoyl domains of lipoate-dependent enzymes, thereby converting the octanoylated domains into lipoylated derivatives. The chain is Lipoyl synthase from Acidiphilium cryptum (strain JF-5).